The following is a 229-amino-acid chain: Ribonuclease HII (229 aa).

Residues 34 to 223 (WPVAGADEAG…LRKTENGPET (190 aa)) enclose the RNase H type-2 domain. A divalent metal cation is bound by residues aspartate 40, glutamate 41, and aspartate 131. Residues 209-229 (MSFRPLRKTENGPETDELLSE) form a disordered region.

It belongs to the RNase HII family. It depends on Mn(2+) as a cofactor. Requires Mg(2+) as cofactor.

The protein resides in the cytoplasm. The enzyme catalyses Endonucleolytic cleavage to 5'-phosphomonoester.. Its function is as follows. Endonuclease that specifically degrades the RNA of RNA-DNA hybrids. The chain is Ribonuclease HII from Rhizobium johnstonii (strain DSM 114642 / LMG 32736 / 3841) (Rhizobium leguminosarum bv. viciae).